The following is a 296-amino-acid chain: Chondrolectin (296 aa).

Residues 1-20 (MRATLRILCALTFLVSCSRG) form the signal peptide. Residues 21 to 238 (ARVVSGQTVC…RLIIAGPSSM (218 aa)) lie on the Extracellular side of the membrane. The C-type lectin domain maps to 38 to 187 (CYKIAYFKDV…CNMKHNFICK (150 aa)). A compositionally biased stretch (basic and acidic residues) spans 197–221 (VQSDRPGGHDVDLSTEDKEDRRTPP). The segment at 197 to 229 (VQSDRPGGHDVDLSTEDKEDRRTPPTDEDESPR) is disordered. A helical membrane pass occupies residues 239–266 (LLIYVIIPTIPLLLLILVASGTCCFQML). Residues 267-296 (SKSKPRTKTSVNQSTLWISKTPKIDSGMEV) are Cytoplasmic-facing.

Expressed in developing motor neurons.

The protein localises to the membrane. Plays a role in the development of the nervous system such as in neurite outgrowth and elongation. Involved in motor axon growth and guidance. Required for correct interactions of motor axons with the horizontal myoseptum. This is Chondrolectin (chodl) from Danio rerio (Zebrafish).